Reading from the N-terminus, the 192-residue chain is MQVILLERISKLGQMGETVKVRDGFARNYLLPLGKALRANAANKTRFEAERATLEARNLERKSEAQTVADVLDGKSFIVVRSAGETGQLYGSVAARDVVDILGAEGFNIGRNQVHLNTPIKSIGLHKVELQLHAEVEIHVELNVARSAEEAERQSKGEELTSVDAIYGVDEDALRPEDFFDPEADGVDEDEA.

A disordered region spans residues 172–192 (DALRPEDFFDPEADGVDEDEA). The segment covering 179–192 (FFDPEADGVDEDEA) has biased composition (acidic residues).

This sequence belongs to the bacterial ribosomal protein bL9 family.

Binds to the 23S rRNA. The chain is Large ribosomal subunit protein bL9 from Rhizobium johnstonii (strain DSM 114642 / LMG 32736 / 3841) (Rhizobium leguminosarum bv. viciae).